Here is a 373-residue protein sequence, read N- to C-terminus: tRNA-specific 2-thiouridylase MnmA (373 aa).

Residues 12-19 (GMSGGVDS) and methionine 38 each bind ATP. Residues 98–100 (NPD) are interaction with target base in tRNA. Cysteine 103 (nucleophile) is an active-site residue. Cysteine 103 and cysteine 200 are disulfide-bonded. Glycine 127 is a binding site for ATP. Residues 150 to 152 (KDQ) are interaction with tRNA. The active-site Cysteine persulfide intermediate is the cysteine 200. Residues 312-313 (RY) form an interaction with tRNA region.

This sequence belongs to the MnmA/TRMU family.

It is found in the cytoplasm. The catalysed reaction is S-sulfanyl-L-cysteinyl-[protein] + uridine(34) in tRNA + AH2 + ATP = 2-thiouridine(34) in tRNA + L-cysteinyl-[protein] + A + AMP + diphosphate + H(+). Catalyzes the 2-thiolation of uridine at the wobble position (U34) of tRNA, leading to the formation of s(2)U34. The chain is tRNA-specific 2-thiouridylase MnmA from Streptococcus mutans serotype c (strain ATCC 700610 / UA159).